The primary structure comprises 435 residues: Cytochrome c biogenesis protein Ccs1 (435 aa).

3 consecutive transmembrane segments (helical) span residues 17-37, 77-97, and 163-183; these read LSLSISLLLLIASISIIGTII, NPCFVLVLVLFFCSLLACTFS, and IAPIVVHFSIILTFIGSLISL.

The protein belongs to the Ccs1/CcsB family. As to quaternary structure, may interact with CcsA.

It is found in the plastid. The protein localises to the chloroplast thylakoid membrane. Required during biogenesis of c-type cytochromes (cytochrome c6 and cytochrome f) at the step of heme attachment. This Gracilaria tenuistipitata var. liui (Red alga) protein is Cytochrome c biogenesis protein Ccs1.